The sequence spans 320 residues: Zinc finger Ran-binding domain-containing protein 2 (320 aa).

S9 carries the phosphoserine modification. A RanBP2-type 1 zinc finger spans residues 9–40 (SDGDWICPDKKCGNVNFARRTSCNRCGREKTT). 3 positions are modified to N6-acetyllysine: K18, K54, and K92. The segment at 65–94 (SANDWQCKTCSNVNWARRSECNMCNTPKYA) adopts a RanBP2-type 2 zinc-finger fold. The interval 117–320 (REESDGEYDE…QVIGENTKQP (204 aa)) is disordered. Phosphoserine is present on residues S120, S153, S181, S188, and S193. Positions 150 to 163 (DKESEGEEEDEDED) are enriched in acidic residues. A required for nuclear targeting region spans residues 151 to 320 (KESEGEEEDE…QVIGENTKQP (170 aa)). Residues 196–210 (KKSNRRSRSKSRSSH) show a composition bias toward basic residues. 2 stretches are compositionally biased toward low complexity: residues 211 to 224 (SRSS…SSSR) and 232 to 242 (RSSSSSQSRSR). The segment covering 251-273 (SRGSKSRSSSRSHRGSSSPRKRS) has biased composition (basic residues).

This sequence belongs to the ZRANB2 family. Interacts with the C-terminal half of SNRP70/U1-70K, the Arg/Ser-rich domain of AKAP17A as well as with U2AF1 and CLK1. Phosphorylated on Ser-310 upon DNA damage, probably by ATM or ATR.

It is found in the nucleus. Splice factor required for alternative splicing of TRA2B/SFRS10 transcripts. Binds to ssRNA containing the consensus sequence 5'-AGGUAA-3'. May interfere with constitutive 5'-splice site selection. The protein is Zinc finger Ran-binding domain-containing protein 2 of Pongo abelii (Sumatran orangutan).